Here is a 198-residue protein sequence, read N- to C-terminus: Imidazoleglycerol-phosphate dehydratase (198 aa).

It belongs to the imidazoleglycerol-phosphate dehydratase family.

The protein localises to the cytoplasm. The catalysed reaction is D-erythro-1-(imidazol-4-yl)glycerol 3-phosphate = 3-(imidazol-4-yl)-2-oxopropyl phosphate + H2O. Its pathway is amino-acid biosynthesis; L-histidine biosynthesis; L-histidine from 5-phospho-alpha-D-ribose 1-diphosphate: step 6/9. This chain is Imidazoleglycerol-phosphate dehydratase, found in Gluconacetobacter diazotrophicus (strain ATCC 49037 / DSM 5601 / CCUG 37298 / CIP 103539 / LMG 7603 / PAl5).